Consider the following 698-residue polypeptide: Ion-translocating oxidoreductase complex subunit C (698 aa).

4Fe-4S ferredoxin-type domains lie at 366–397 (TEMGLSEPEQSCIRCGLCVDACPAGLLPQQLY) and 407–436 (KARNHNLFDCIECGACAYVCPSNIPLVQYY). [4Fe-4S] cluster-binding residues include cysteine 377, cysteine 380, cysteine 383, cysteine 387, cysteine 416, cysteine 419, cysteine 422, and cysteine 426.

This sequence belongs to the 4Fe4S bacterial-type ferredoxin family. RnfC subfamily. As to quaternary structure, the complex is composed of six subunits: RnfA, RnfB, RnfC, RnfD, RnfE and RnfG. Requires [4Fe-4S] cluster as cofactor.

It localises to the cell inner membrane. In terms of biological role, part of a membrane-bound complex that couples electron transfer with translocation of ions across the membrane. The protein is Ion-translocating oxidoreductase complex subunit C of Yersinia pseudotuberculosis serotype O:3 (strain YPIII).